Consider the following 418-residue polypeptide: 3-phosphoshikimate 1-carboxyvinyltransferase (418 aa).

3-phosphoshikimate-binding residues include Lys26, Ser27, and Arg31. Phosphoenolpyruvate is bound at residue Lys26. 2 residues coordinate phosphoenolpyruvate: Gly97 and Arg125. 3-phosphoshikimate is bound by residues Ser170, Ser171, Gln172, Asp297, Asn320, and Lys324. Residue Gln172 participates in phosphoenolpyruvate binding. The Proton acceptor role is filled by Asp297. Phosphoenolpyruvate is bound by residues Arg328, Arg375, and Lys400.

The protein belongs to the EPSP synthase family. In terms of assembly, monomer.

Its subcellular location is the cytoplasm. The enzyme catalyses 3-phosphoshikimate + phosphoenolpyruvate = 5-O-(1-carboxyvinyl)-3-phosphoshikimate + phosphate. Its pathway is metabolic intermediate biosynthesis; chorismate biosynthesis; chorismate from D-erythrose 4-phosphate and phosphoenolpyruvate: step 6/7. In terms of biological role, catalyzes the transfer of the enolpyruvyl moiety of phosphoenolpyruvate (PEP) to the 5-hydroxyl of shikimate-3-phosphate (S3P) to produce enolpyruvyl shikimate-3-phosphate and inorganic phosphate. This Pseudomonas syringae pv. tomato (strain ATCC BAA-871 / DC3000) protein is 3-phosphoshikimate 1-carboxyvinyltransferase.